A 962-amino-acid polypeptide reads, in one-letter code: MAEGRGSRERPDVETQKTELGALMGTTLQRGAQWYLIDSRWFKQWKKYVGFDSWDMYNVGEHNLFPGPIDNSGLFSDPESQTLKEHLIDELDYVLVPAEAWNKLLNWYGCVEGQQPIVRKVVEHGLFVKHCKVEVYLLELKLCENSDPTNVLSCHFSKADTIATIEKEMRKLFNIPAERETRLWNKYMSNTYEQLSKLDNTIQDAGLYQGQVLVIEPQNEDGTWPRQSLQSKSSTAPSRNFTTSSKPSASPYCSVSASLIANGDSTNSSGMHSSGVSRGGSGFSASYNCQEPPSPHIQPGLCGLGNLGNTCFMNSALQCLSNTAPLTEYFLKDEYEAEINRDNPLGMKGEIAEAYAELIKQMWSGRDTHVAPRMFKTQVGRFAPQFSGYQQQDSQELLAFILDGLHEDLNRVKKKPYLEPKDANGRPDAVVAKEAWENHRLRNDSVIVDTFHGLFKSTLVCPECAKVSVTFDPFCYLTLPLPLKKDRIMEVFLVPADPQCRPIQYRVTVPLMGAISDLCEALSKLSGIAAENMVVTDVYNHRFHKIFQMDEGLSHITPRDDIFVYEVCNTSMDGSECITLPVYFREKKSRPSSASSGAVLYGQPLLVSVPKHKLTLESLYQAVCDRISRYIKQPLPDEFLSSPLEPGACNGSRSSYEGDEEEEMDHQEEGKEQLSEVEGSGEDDQGDDHSESAQKVKGQPRHKRLFTFSLVNSCGTADINSLATDGKLLKLNSRSTLAIDWDSETRSLYFDEQESEACEKHLSMSQPQKKKKAAVALRECIELFTTMETLGEHDPWYCPTCKKHQQATKKFDLWSLPKILVVHLKRFSYNRYWRDKLDTVVEFPVRALNMSEFVCDRSARPYVYDLIAVSNHYGAMGVGHYTAYAKNRLNGKWYYFDDSSVSLASEDQIVTKAAYVLFYQRRDDECSSTSSLGSFPGSDGGVKLSSSHQGMGDEEAYNMDTN.

In terms of domain architecture, DUSP spans 11-122 (PDVETQKTEL…GQQPIVRKVV (112 aa)). The segment at 27-216 (TLQRGAQWYL…LYQGQVLVIE (190 aa)) is necessary for interaction with SART3. Positions 133–141 (VEVYLLELK) match the Nuclear export signal motif. A Ubiquitin-like 1 domain is found at 142–226 (LCENSDPTNV…PQNEDGTWPR (85 aa)). Residues 220–249 (EDGTWPRQSLQSKSSTAPSRNFTTSSKPSA) form a disordered region. Residues 225–249 (PRQSLQSKSSTAPSRNFTTSSKPSA) are compositionally biased toward polar residues. The interval 229–295 (LQSKSSTAPS…SYNCQEPPSP (67 aa)) is required for USP4 activation by providing conformational flexibility between the DUSP and catalytic domains. Positions 302–922 (CGLGNLGNTC…AAYVLFYQRR (621 aa)) constitute a USP domain. Catalysis depends on cysteine 311, which acts as the Nucleophile. A regulates ubiquitin dissociation region spans residues 384–386 (PQF). A necessary for interaction with RBL2 region spans residues 405 to 407 (LHE). Position 445 is a phosphoserine (serine 445). Residues 459–463 (LVCPE) are necessary for interaction with RB1 and RBL2. 2 residues coordinate Zn(2+): cysteine 461 and cysteine 464. The Ubiquitin-like 2 domain maps to 483-571 (LKKDRIMEVF…IFVYEVCNTS (89 aa)). An interacts with DUSP and ubiquitin-like 1 domains and is required for USP4 activation region spans residues 485 to 774 (KDRIMEVFLV…SQPQKKKKAA (290 aa)). Residues 638–699 (EFLSSPLEPG…SESAQKVKGQ (62 aa)) form a disordered region. Residue serine 655 is modified to Phosphoserine. The segment covering 657–666 (EGDEEEEMDH) has biased composition (acidic residues). A phosphoserine mark is found at serine 675 and serine 680. The Nuclear localization signal motif lies at 766 to 771 (QPQKKK). The Zn(2+) site is built by cysteine 798 and cysteine 801. The active-site Proton acceptor is histidine 880. Residues 928-937 (STSSLGSFPG) are compositionally biased toward low complexity. The interval 928 to 962 (STSSLGSFPGSDGGVKLSSSHQGMGDEEAYNMDTN) is disordered. The segment covering 952–962 (GDEEAYNMDTN) has biased composition (acidic residues).

It belongs to the peptidase C19 family. USP4 subfamily. In terms of assembly, interacts with RB1 (both dephosphorylated and hypophosphorylated forms). Interacts with RBL1 and RBL2. Interacts with ADORA2A (via cytoplasmic C-terminus); the interaction is direct. Interacts with SART3; recruits USP4 to its substrate PRPF3. Post-translationally, phosphorylated at Ser-445 by PKB/AKT1 in response to EGF stimulus, promoting its ability deubiquitinate RHEB. In terms of processing, monoubiquitinated by TRIM21. Ubiquitination does not lead to its proteasomal degradation. Autodeubiquitinated. Expressed in brain, kidney, liver and spleen (at protein level).

Its subcellular location is the cytoplasm. The protein resides in the nucleus. The catalysed reaction is Thiol-dependent hydrolysis of ester, thioester, amide, peptide and isopeptide bonds formed by the C-terminal Gly of ubiquitin (a 76-residue protein attached to proteins as an intracellular targeting signal).. The completion of the deubiquitinase reaction is mediated by the DUSP and ubiquitin-like 1 domains which promotes the release of ubiquitin from the catalytic site enabling subsequent reactions to occur. Its function is as follows. Deubiquitinating enzyme that removes conjugated ubiquitin from target proteins. Deubiquitinates PDPK1. Deubiquitinates TRIM21. Deubiquitinates receptor ADORA2A which increases the amount of functional receptor at the cell surface. Deubiquitinates HAS2. Deubiquitinates RHEB in response to EGF signaling, promoting mTORC1 signaling. May regulate mRNA splicing through deubiquitination of the U4 spliceosomal protein PRPF3. This may prevent its recognition by the U5 component PRPF8 thereby destabilizing interactions within the U4/U6.U5 snRNP. May also play a role in the regulation of quality control in the ER. In Mus musculus (Mouse), this protein is Ubiquitin carboxyl-terminal hydrolase 4 (Usp4).